The following is a 540-amino-acid chain: CTP synthase (540 aa).

The segment at 1-270 (MNNLTSTKFI…DTQILKHFNI (270 aa)) is amidoligase domain. Ser18 lines the CTP pocket. A UTP-binding site is contributed by Ser18. ATP contacts are provided by residues 19-24 (SLGKGL) and Asp76. The Mg(2+) site is built by Asp76 and Glu144. CTP is bound by residues 151-153 (DIE), 191-196 (KTKPTQ), and Lys227. UTP contacts are provided by residues 191–196 (KTKPTQ) and Lys227. The Glutamine amidotransferase type-1 domain maps to 295 to 537 (TIAIIGKYIK…VQASLNYQET (243 aa)). Position 356 (Gly356) interacts with L-glutamine. The active-site Nucleophile; for glutamine hydrolysis is Cys383. L-glutamine contacts are provided by residues 384–387 (MGMQ), Glu407, and Arg462. Catalysis depends on residues His510 and Glu512.

Belongs to the CTP synthase family. In terms of assembly, homotetramer.

It catalyses the reaction UTP + L-glutamine + ATP + H2O = CTP + L-glutamate + ADP + phosphate + 2 H(+). It carries out the reaction L-glutamine + H2O = L-glutamate + NH4(+). The enzyme catalyses UTP + NH4(+) + ATP = CTP + ADP + phosphate + 2 H(+). Its pathway is pyrimidine metabolism; CTP biosynthesis via de novo pathway; CTP from UDP: step 2/2. Allosterically activated by GTP, when glutamine is the substrate; GTP has no effect on the reaction when ammonia is the substrate. The allosteric effector GTP functions by stabilizing the protein conformation that binds the tetrahedral intermediate(s) formed during glutamine hydrolysis. Inhibited by the product CTP, via allosteric rather than competitive inhibition. Functionally, catalyzes the ATP-dependent amination of UTP to CTP with either L-glutamine or ammonia as the source of nitrogen. Regulates intracellular CTP levels through interactions with the four ribonucleotide triphosphates. This is CTP synthase from Ehrlichia ruminantium (strain Welgevonden).